Reading from the N-terminus, the 29-residue chain is Ranatuerin-2SEa (29 aa).

Cysteine 23 and cysteine 29 are oxidised to a cystine.

In terms of tissue distribution, expressed by the skin glands.

The protein resides in the secreted. In terms of biological role, mast cell degranulating peptide. Causes histamine release from rat peritoneal mast cells in vitro. Has antibacterial activity against the Gram-negative bacterium E.coli K12 and Gram-positive bacterium M.luteus NCT C2665. The chain is Ranatuerin-2SEa from Lithobates sevosus (Dusky gopher frog).